A 247-amino-acid chain; its full sequence is uncharacterized protein (247 aa).

This is an uncharacterized protein from Rickettsia prowazekii (strain Madrid E).